The primary structure comprises 102 residues: Protein translation factor SUI1 homolog (102 aa).

This sequence belongs to the SUI1 family.

This Cenarchaeum symbiosum (strain A) protein is Protein translation factor SUI1 homolog.